A 488-amino-acid polypeptide reads, in one-letter code: UDP-N-acetylmuramate--L-alanine ligase (488 aa).

An ATP-binding site is contributed by 127 to 133 (GTHGKTT).

Belongs to the MurCDEF family.

It is found in the cytoplasm. It catalyses the reaction UDP-N-acetyl-alpha-D-muramate + L-alanine + ATP = UDP-N-acetyl-alpha-D-muramoyl-L-alanine + ADP + phosphate + H(+). It functions in the pathway cell wall biogenesis; peptidoglycan biosynthesis. Its function is as follows. Cell wall formation. The polypeptide is UDP-N-acetylmuramate--L-alanine ligase (Shewanella oneidensis (strain ATCC 700550 / JCM 31522 / CIP 106686 / LMG 19005 / NCIMB 14063 / MR-1)).